The sequence spans 345 residues: tRNA pseudouridine synthase B (345 aa).

Asp39 acts as the Nucleophile in catalysis.

It belongs to the pseudouridine synthase TruB family. Type 1 subfamily.

The enzyme catalyses uridine(55) in tRNA = pseudouridine(55) in tRNA. In terms of biological role, responsible for synthesis of pseudouridine from uracil-55 in the psi GC loop of transfer RNAs. This Rickettsia africae (strain ESF-5) protein is tRNA pseudouridine synthase B.